Here is a 190-residue protein sequence, read N- to C-terminus: Orotate phosphoribosyltransferase (190 aa).

114 to 122 contributes to the 5-phospho-alpha-D-ribose 1-diphosphate binding site; the sequence is EDVVTTGGS. Orotate is bound by residues Thr-118 and Arg-146.

It belongs to the purine/pyrimidine phosphoribosyltransferase family. PyrE subfamily. Homodimer. Requires Mg(2+) as cofactor.

It carries out the reaction orotidine 5'-phosphate + diphosphate = orotate + 5-phospho-alpha-D-ribose 1-diphosphate. The protein operates within pyrimidine metabolism; UMP biosynthesis via de novo pathway; UMP from orotate: step 1/2. Catalyzes the transfer of a ribosyl phosphate group from 5-phosphoribose 1-diphosphate to orotate, leading to the formation of orotidine monophosphate (OMP). This chain is Orotate phosphoribosyltransferase, found in Thermoanaerobacter sp. (strain X514).